The primary structure comprises 48 residues: Large ribosomal subunit protein eL40 (48 aa).

It belongs to the eukaryotic ribosomal protein eL40 family.

The sequence is that of Large ribosomal subunit protein eL40 from Methanocella arvoryzae (strain DSM 22066 / NBRC 105507 / MRE50).